A 448-amino-acid polypeptide reads, in one-letter code: Cysteine--tRNA ligase (448 aa).

Cys-27 serves as a coordination point for Zn(2+). The 'HIGH' region signature appears at 29–39 (PTVYNYIHVGN). Positions 210, 235, and 239 each coordinate Zn(2+). A 'KMSKS' region motif is present at residues 267 to 271 (KMSKS). Residue Lys-270 coordinates ATP.

The protein belongs to the class-I aminoacyl-tRNA synthetase family. As to quaternary structure, monomer. The cofactor is Zn(2+).

The protein localises to the cytoplasm. The catalysed reaction is tRNA(Cys) + L-cysteine + ATP = L-cysteinyl-tRNA(Cys) + AMP + diphosphate. In Lactococcus lactis subsp. cremoris (strain SK11), this protein is Cysteine--tRNA ligase.